A 322-amino-acid polypeptide reads, in one-letter code: Mas-related G-protein coupled receptor member B5 (322 aa).

Residues Met1–Asn34 are Extracellular-facing. Asn11, Asn16, and Asn19 each carry an N-linked (GlcNAc...) asparagine glycan. A helical transmembrane segment spans residues Phe35 to Leu55. Over Ala56–Asn70 the chain is Cytoplasmic. A helical transmembrane segment spans residues Leu71–Leu91. Topologically, residues Gln92 to Thr98 are extracellular. A helical transmembrane segment spans residues Phe99–Ile119. Residues Ser120 to Ala147 lie on the Cytoplasmic side of the membrane. Residues Leu148–Phe168 form a helical membrane-spanning segment. The Extracellular portion of the chain corresponds to Ser169–Lys172. A helical membrane pass occupies residues Tyr173 to Val193. The Cytoplasmic segment spans residues Pro194 to Arg216. The chain crosses the membrane as a helical span at residues Phe217–Ile237. Residues Tyr238–Thr260 lie on the Extracellular side of the membrane. A helical transmembrane segment spans residues Ile261–Ile281. Residues Arg282–Val322 are Cytoplasmic-facing. Positions Thr302–Val322 are disordered.

The protein belongs to the G-protein coupled receptor 1 family. Mas subfamily.

It localises to the membrane. Its function is as follows. Orphan receptor. Probably involved in the function of nociceptive neurons. May regulate nociceptor function and/or development, including the sensation or modulation of pain. In Mus musculus (Mouse), this protein is Mas-related G-protein coupled receptor member B5 (Mrgprb5).